The following is a 467-amino-acid chain: Heat shock factor protein 3 (467 aa).

A DNA-binding region spans residues 16 to 121 (VPGFLAKLWA…LLENIKRKVS (106 aa)). The segment at 128–201 (LKVCAEDLHK…LSLMRGNYIV (74 aa)) is hydrophobic repeat HR-A/B. A hydrophobic repeat HR-C region spans residues 364-389 (IQDFLNCIDASLEELQAMLSGKQYSF). A disordered region spans residues 427 to 449 (EDLGASERETAGSKGGQEGTESC).

This sequence belongs to the HSF family. Homotrimer. As to expression, expressed in most tissues. High levels are found in erythrocytes and low levels in liver.

It localises to the cytoplasm. The protein resides in the nucleus. Its function is as follows. DNA-binding protein that specifically binds heat shock promoter elements (HSE) and activates transcription. HSF3 binds DNA constitutively only when the C-terminal region is deleted. This chain is Heat shock factor protein 3 (HSF3), found in Gallus gallus (Chicken).